Here is a 400-residue protein sequence, read N- to C-terminus: Phosphoglycerate kinase (400 aa).

Substrate contacts are provided by residues 19 to 21, R38, 61 to 64, R124, and R161; these read DLN and HLGR. ATP-binding positions include K211, G299, E330, and 356 to 359; that span reads GGDS.

It belongs to the phosphoglycerate kinase family. In terms of assembly, monomer.

It localises to the cytoplasm. The catalysed reaction is (2R)-3-phosphoglycerate + ATP = (2R)-3-phospho-glyceroyl phosphate + ADP. It functions in the pathway carbohydrate degradation; glycolysis; pyruvate from D-glyceraldehyde 3-phosphate: step 2/5. The chain is Phosphoglycerate kinase from Frankia casuarinae (strain DSM 45818 / CECT 9043 / HFP020203 / CcI3).